The primary structure comprises 154 residues: 3-hydroxyacyl-[acyl-carrier-protein] dehydratase FabZ (154 aa).

The active site involves H54.

This sequence belongs to the thioester dehydratase family. FabZ subfamily.

It localises to the cytoplasm. It catalyses the reaction a (3R)-hydroxyacyl-[ACP] = a (2E)-enoyl-[ACP] + H2O. Its function is as follows. Involved in unsaturated fatty acids biosynthesis. Catalyzes the dehydration of short chain beta-hydroxyacyl-ACPs and long chain saturated and unsaturated beta-hydroxyacyl-ACPs. This chain is 3-hydroxyacyl-[acyl-carrier-protein] dehydratase FabZ, found in Shewanella sp. (strain MR-4).